The following is a 207-amino-acid chain: LexA repressor (207 aa).

Positions Val-29–Ala-49 form a DNA-binding region, H-T-H motif. Active-site for autocatalytic cleavage activity residues include Ser-128 and Lys-166.

Belongs to the peptidase S24 family. As to quaternary structure, homodimer.

It catalyses the reaction Hydrolysis of Ala-|-Gly bond in repressor LexA.. In terms of biological role, represses a number of genes involved in the response to DNA damage (SOS response), including recA and lexA. In the presence of single-stranded DNA, RecA interacts with LexA causing an autocatalytic cleavage which disrupts the DNA-binding part of LexA, leading to derepression of the SOS regulon and eventually DNA repair. The chain is LexA repressor from Lactobacillus johnsonii (strain CNCM I-12250 / La1 / NCC 533).